The primary structure comprises 390 residues: GTPase Obg (390 aa).

The region spanning methionine 1 to leucine 159 is the Obg domain. The OBG-type G domain maps to alanine 160–glutamate 333. GTP is bound by residues glycine 166 to serine 173, phenylalanine 191 to isoleucine 195, aspartate 213 to glycine 216, asparagine 283 to aspartate 286, and serine 314 to isoleucine 316. Serine 173 and threonine 193 together coordinate Mg(2+). A compositionally biased stretch (acidic residues) spans threonine 367–aspartate 382. Residues threonine 367–aspartate 390 form a disordered region.

The protein belongs to the TRAFAC class OBG-HflX-like GTPase superfamily. OBG GTPase family. Monomer. The cofactor is Mg(2+).

It localises to the cytoplasm. Functionally, an essential GTPase which binds GTP, GDP and possibly (p)ppGpp with moderate affinity, with high nucleotide exchange rates and a fairly low GTP hydrolysis rate. Plays a role in control of the cell cycle, stress response, ribosome biogenesis and in those bacteria that undergo differentiation, in morphogenesis control. This Vibrio parahaemolyticus serotype O3:K6 (strain RIMD 2210633) protein is GTPase Obg.